Here is a 22-residue protein sequence, read N- to C-terminus: Unknown endosperm protein L (22 aa).

Residues 1 to 11 (MRHSNKIRDEE) are compositionally biased toward basic and acidic residues. The disordered stretch occupies residues 1 to 22 (MRHSNKIRDEEMVNNTRLNXXA). Residues 13–22 (VNNTRLNXXA) are compositionally biased toward polar residues.

In terms of processing, the N-terminus is blocked.

In Hordeum vulgare (Barley), this protein is Unknown endosperm protein L.